The sequence spans 411 residues: Cytosolic Fe-S cluster assembly factor narfl (411 aa).

[4Fe-4S] cluster is bound by residues Cys11, Cys124, Cys180, Cys329, and Cys333.

Belongs to the NARF family. As to quaternary structure, component of the CIA complex.

Component of the cytosolic iron-sulfur protein assembly (CIA) complex, a multiprotein complex that mediates the incorporation of iron-sulfur cluster into extramitochondrial Fe/S proteins. This is Cytosolic Fe-S cluster assembly factor narfl (narfl) from Danio rerio (Zebrafish).